The following is a 408-amino-acid chain: Neutral cholesterol ester hydrolase 1 (408 aa).

Residues 1 to 4 (MRSS) lie on the Cytoplasmic side of the membrane. The helical; Signal-anchor for type II membrane protein transmembrane segment at 5–25 (CVLLTALVALAAYYVYIPLPG) threads the bilayer. Residues 26-408 (SVSDPWKLML…SYIKWLDQNL (383 aa)) lie on the Lumenal side of the membrane. The Involved in the stabilization of the negatively charged intermediate by the formation of the oxyanion hole signature appears at 113–115 (HGG). S191 is a catalytic residue. 2 N-linked (GlcNAc...) asparagine glycosylation sites follow: N270 and N287. Catalysis depends on residues D348 and H378. N-linked (GlcNAc...) asparagine glycosylation is present at N389.

This sequence belongs to the 'GDXG' lipolytic enzyme family. Post-translationally, N-glycosylated.

It is found in the cell membrane. The protein resides in the microsome. The catalysed reaction is a 1-O-alkyl-2-acetyl-sn-glycerol + H2O = a 1-O-alkyl-sn-glycerol + acetate + H(+). It carries out the reaction 1-O-hexadecyl-2-acetyl-sn-glycerol + H2O = 1-O-hexadecyl-sn-glycerol + acetate + H(+). It catalyses the reaction a cholesterol ester + H2O = cholesterol + a fatty acid + H(+). The enzyme catalyses cholesteryl (9Z-octadecenoate) + H2O = cholesterol + (9Z)-octadecenoate + H(+). Hydrolyzes 2-acetyl monoalkylglycerol ether (1-O-alkyl-2-acetyl-sn-glycerol), the penultimate precursor of the pathway for de novo synthesis of platelet-activating factor. May be responsible for the hydrolysis of cholesterol esters (such as cholesteryl (9Z-octadecenoate)) in macrophages. Also involved in organ detoxification by hydrolyzing exogenous organophosphorus compounds. The polypeptide is Neutral cholesterol ester hydrolase 1 (NCEH1) (Pongo abelii (Sumatran orangutan)).